The sequence spans 242 residues: Small ribosomal subunit protein uS2 (242 aa).

The protein belongs to the universal ribosomal protein uS2 family.

The chain is Small ribosomal subunit protein uS2 from Idiomarina loihiensis (strain ATCC BAA-735 / DSM 15497 / L2-TR).